We begin with the raw amino-acid sequence, 218 residues long: MANQEIFDKLTNAIATQNVAGCAQLAQEALDAGISPLDIITKGLSPGMKIIGDKFEAAEVFLPQIMMSAKAMEAAMKVLTPELEKTKVEGEEGTGLAITFVAEGDIHDIGHRLVTTMLGANGFDILDLGTDVLNETVVEEAAKHKGEKVLLVGSALMTTSMLGQKDLMDRLREENLRDSVKCMFGGAPVSSKWIDEIGADATAENAAEAAKVALNIMK.

In terms of domain architecture, B12-binding N-terminal spans 1 to 91 (MANQEIFDKL…ELEKTKVEGE (91 aa)). In terms of domain architecture, B12-binding spans 94 to 218 (TGLAITFVAE…AAKVALNIMK (125 aa)). Histidine 107 is a binding site for methylcob(III)alamin.

It belongs to the methylamine corrinoid protein family. Can form a complex with MtmB.

It functions in the pathway one-carbon metabolism; methanogenesis from methylamine. Acts as a methyl group carrier between MtmB and MtbA. The protein is Monomethylamine corrinoid protein 1 (mtmC1) of Methanosarcina acetivorans (strain ATCC 35395 / DSM 2834 / JCM 12185 / C2A).